The chain runs to 458 residues: Argininosuccinate lyase (458 aa).

Belongs to the lyase 1 family. Argininosuccinate lyase subfamily.

Its subcellular location is the cytoplasm. The enzyme catalyses 2-(N(omega)-L-arginino)succinate = fumarate + L-arginine. The protein operates within amino-acid biosynthesis; L-arginine biosynthesis; L-arginine from L-ornithine and carbamoyl phosphate: step 3/3. This is Argininosuccinate lyase from Actinobacillus pleuropneumoniae serotype 5b (strain L20).